The primary structure comprises 476 residues: Variant surface glycoprotein MITAT 1.2 (476 aa).

The signal sequence occupies residues 1–26 (MPSNQEARLFLAVLVLAQVLPILVDS). 2 cysteine pairs are disulfide-bonded: C41–C171 and C149–C213. N-linked (GlcNAc...) asparagine glycosylation occurs at N289. 2 disordered regions span residues 389–418 (QKHK…CKSP) and 435–459 (EEAK…TGSS). 2 disulfides stabilise this stretch: C407–C419 and C415–C430. Residues 435–449 (EEAKKVADETAKDGK) show a composition bias toward basic and acidic residues. Residues 450 to 459 (TGNTNTTGSS) are compositionally biased toward low complexity. An N-linked (GlcNAc...) asparagine glycan is attached at N454. S459 is lipidated: GPI-anchor amidated serine. The propeptide at 460 to 476 (NSFVISKTPLWLAVLLF) is removed in mature form.

In terms of assembly, homodimer.

It is found in the cell membrane. In terms of biological role, VSG forms a coat on the surface of the parasite. The trypanosome evades the immune response of the host by expressing a series of antigenically distinct VSGs from an estimated 1000 VSG genes. In Trypanosoma brucei brucei, this protein is Variant surface glycoprotein MITAT 1.2.